A 227-amino-acid polypeptide reads, in one-letter code: MPEINTSHLDEQQVQLLAEMCILIDENDNKIGADTKKNCHLNENIDKGLLHRAFSVFLFNTENKLLLQQRSDAKITFPGCFTNSCCSHPLSNPGELEENDAIGVKRAAQRRLKAELGIPLEEVDPNEMHYLTRIYYKAQSDGIWGEHEIDYILFLKKNVTLNPDPNEIKSYCYVSKEELKELVKKAASGEVKLTPWFKIIVDTFLFKWWDNLNHLSQFVDHEKIHRM.

Lysine 36 is a substrate binding site. Mg(2+)-binding residues include histidine 40 and histidine 51. The region spanning 49–199 (LLHRAFSVFL…EVKLTPWFKI (151 aa)) is the Nudix hydrolase domain. 2 residues coordinate substrate: arginine 70 and lysine 74. The active site involves cysteine 86. Serine 87 is a binding site for substrate. Positions 146 and 148 each coordinate Mg(2+). Glutamate 148 is an active-site residue. Lysine 176 bears the N6-acetyllysine mark. Positions 225–227 (HRM) match the Microbody targeting signal motif.

This sequence belongs to the IPP isomerase type 1 family. Monomer. Mg(2+) is required as a cofactor.

The protein resides in the peroxisome. The catalysed reaction is isopentenyl diphosphate = dimethylallyl diphosphate. It functions in the pathway isoprenoid biosynthesis; dimethylallyl diphosphate biosynthesis; dimethylallyl diphosphate from isopentenyl diphosphate: step 1/1. In terms of biological role, catalyzes the 1,3-allylic rearrangement of the homoallylic substrate isopentenyl (IPP) to its highly electrophilic allylic isomer, dimethylallyl diphosphate (DMAPP). This is Isopentenyl-diphosphate Delta-isomerase 1 (IDI1) from Mesocricetus auratus (Golden hamster).